The chain runs to 128 residues: Probable 4-amino-4-deoxy-L-arabinose-phosphoundecaprenol flippase subunit ArnF (128 aa).

The Cytoplasmic segment spans residues 1-2 (MG). The chain crosses the membrane as a helical span at residues 3–23 (LMWGLFSVIIASVAQLSLGFA). Residues 24–35 (ASHLPPMTHLWD) lie on the Periplasmic side of the membrane. A helical transmembrane segment spans residues 36–56 (FIAALLAFGLDARILLLGLLG). Residues 57-76 (YLLSVFCWYKTLHKLALSKA) lie on the Cytoplasmic side of the membrane. A helical membrane pass occupies residues 77–97 (YALLSMSYVLVWIASMVLPGW). Topologically, residues 98 to 100 (EGT) are periplasmic. The helical transmembrane segment at 101-121 (FSLKALLGVACIMSGLMLIFL) threads the bilayer. Residues 122–128 (PMTKQRY) lie on the Cytoplasmic side of the membrane.

The protein belongs to the ArnF family. In terms of assembly, heterodimer of ArnE and ArnF.

It is found in the cell inner membrane. The protein operates within bacterial outer membrane biogenesis; lipopolysaccharide biosynthesis. In terms of biological role, translocates 4-amino-4-deoxy-L-arabinose-phosphoundecaprenol (alpha-L-Ara4N-phosphoundecaprenol) from the cytoplasmic to the periplasmic side of the inner membrane. In Escherichia coli (strain 55989 / EAEC), this protein is Probable 4-amino-4-deoxy-L-arabinose-phosphoundecaprenol flippase subunit ArnF.